The following is a 398-amino-acid chain: MGKTISLLISVVLVAYYLYIPLPDAIEEPWKVVWETAFVKIGTDLASFGELLGISHFMETIQLLMSFQEVPPTSDEHVTVMETAFDSVPVRIYIPKRKSMALRRGLFYIHGGGWCLGSAAHFSYDTLSRWTAHKLDAVVVSTDYGLAPKHHFPRQFEDVYRSLRWFLQEDVLEKYGVDPRRVGVSGDSAGGNLAAAVTQQLIQDPDVKIKLKVQALIYPALQALDTNVPSQQEGSHFPVLTRSLMVRFWSEYFTTDRGLEKAMLLNQHVPMESSHLLQFVNWSSLLPERYKKSPVYKNPTPGSSELAQKYPGFIDVKACPLLANDNILHHLPKTYIITCQYDVLRDDGLMYVKRLQNVGVHVTHHHVEDGFHGTFSFPGLKLSERMKNQYLSWLIKNL.

Residues 1-5 (MGKTI) lie on the Cytoplasmic side of the membrane. The helical; Signal-anchor for type II membrane protein transmembrane segment at 6 to 26 (SLLISVVLVAYYLYIPLPDAI) threads the bilayer. The Lumenal segment spans residues 27-398 (EEPWKVVWET…QYLSWLIKNL (372 aa)). Residues 110–112 (HGG) carry the Involved in the stabilization of the negatively charged intermediate by the formation of the oxyanion hole motif. A disulfide bridge links cysteine 115 with cysteine 339. The active site involves serine 188. A glycan (N-linked (GlcNAc...) asparagine) is linked at asparagine 281. Active-site residues include aspartate 342 and histidine 372.

This sequence belongs to the 'GDXG' lipolytic enzyme family. In terms of processing, N-glycosylated. In terms of tissue distribution, highest levels in liver with lower levels in jejunum and kidney.

The protein resides in the endoplasmic reticulum membrane. It localises to the microsome membrane. The enzyme catalyses a triacylglycerol + H2O = a diacylglycerol + a fatty acid + H(+). Its function is as follows. Displays cellular triglyceride lipase activity in liver, increases the levels of intracellular fatty acids derived from the hydrolysis of newly formed triglyceride stores and plays a role in very low-density lipoprotein assembly. Displays serine esterase activity in liver. Deacetylates a variety of arylacetamide substrates, including xenobiotic compounds and procarcinogens, converting them to the primary arylamide compounds and increasing their toxicity. The protein is Arylacetamide deacetylase (Aadac) of Mus musculus (Mouse).